Here is an 86-residue protein sequence, read N- to C-terminus: Centromere protein W (86 aa).

It belongs to the CENP-W/WIP1 family. Heterodimer with CENPT; this dimer coassembles with CENPS-CENPX heterodimers at centromeres to form the tetrameric CENP-T-W-S-X complex, which is a subcomplex of the large constitutive centromere-associated network (CCAN, also known as the interphase centromere complex or ICEN). Interacts with NPM1.

The protein resides in the nucleus. Its subcellular location is the chromosome. It localises to the centromere. The protein localises to the kinetochore. It is found in the nucleus matrix. The protein resides in the nucleolus. Component of the CENPA-NAC (nucleosome-associated) complex, a complex that plays a central role in assembly of kinetochore proteins, mitotic progression and chromosome segregation. The CENPA-NAC complex recruits the CENPA-CAD (nucleosome distal) complex and may be involved in incorporation of newly synthesized CENPA into centromeres. Part of a nucleosome-associated complex that binds specifically to histone H3-containing nucleosomes at the centromere, as opposed to nucleosomes containing CENPA. Component of the heterotetrameric CENP-T-W-S-X complex that binds and supercoils DNA, and plays an important role in kinetochore assembly. CENPW has a fundamental role in kinetochore assembly and function. It is one of the inner kinetochore proteins, with most further proteins binding downstream. Required for normal chromosome organization and normal progress through mitosis. In Rattus norvegicus (Rat), this protein is Centromere protein W (Cenpw).